The primary structure comprises 87 residues: DNA-directed RNA polymerase subunit omega (87 aa).

It belongs to the RNA polymerase subunit omega family. As to quaternary structure, the RNAP catalytic core consists of 2 alpha, 1 beta, 1 beta' and 1 omega subunit. When a sigma factor is associated with the core the holoenzyme is formed, which can initiate transcription.

The catalysed reaction is RNA(n) + a ribonucleoside 5'-triphosphate = RNA(n+1) + diphosphate. Promotes RNA polymerase assembly. Latches the N- and C-terminal regions of the beta' subunit thereby facilitating its interaction with the beta and alpha subunits. The chain is DNA-directed RNA polymerase subunit omega from Pseudomonas putida (strain ATCC 700007 / DSM 6899 / JCM 31910 / BCRC 17059 / LMG 24140 / F1).